The chain runs to 763 residues: Serine/threonine-protein kinase PknG (763 aa).

The interval Met-1–Gln-32 is disordered. Positions Tyr-160–Met-406 constitute a Protein kinase domain. ATP-binding positions include Ile-166–Val-174 and Lys-190. Asp-289 acts as the Proton acceptor in catalysis.

The protein belongs to the protein kinase superfamily. Ser/Thr protein kinase family. Autophosphorylated.

The catalysed reaction is L-seryl-[protein] + ATP = O-phospho-L-seryl-[protein] + ADP + H(+). It catalyses the reaction L-threonyl-[protein] + ATP = O-phospho-L-threonyl-[protein] + ADP + H(+). This Mycobacterium leprae (strain TN) protein is Serine/threonine-protein kinase PknG (pknG).